Consider the following 272-residue polypeptide: Large ribosomal subunit protein uL2 (272 aa).

The tract at residues 222-272 (GVAMNPIDHPLGGGEGKSSGGRAACTPWGKPEGVKTRKNKRTDKFIIKRRK) is disordered. The span at 263–272 (TDKFIIKRRK) shows a compositional bias: basic and acidic residues.

It belongs to the universal ribosomal protein uL2 family. As to quaternary structure, part of the 50S ribosomal subunit. Forms a bridge to the 30S subunit in the 70S ribosome.

Functionally, one of the primary rRNA binding proteins. Required for association of the 30S and 50S subunits to form the 70S ribosome, for tRNA binding and peptide bond formation. It has been suggested to have peptidyltransferase activity; this is somewhat controversial. Makes several contacts with the 16S rRNA in the 70S ribosome. The chain is Large ribosomal subunit protein uL2 from Thermodesulfovibrio yellowstonii (strain ATCC 51303 / DSM 11347 / YP87).